Consider the following 404-residue polypeptide: Exodeoxyribonuclease 7 large subunit (404 aa).

The protein belongs to the XseA family. In terms of assembly, heterooligomer composed of large and small subunits.

It is found in the cytoplasm. The catalysed reaction is Exonucleolytic cleavage in either 5'- to 3'- or 3'- to 5'-direction to yield nucleoside 5'-phosphates.. Functionally, bidirectionally degrades single-stranded DNA into large acid-insoluble oligonucleotides, which are then degraded further into small acid-soluble oligonucleotides. This chain is Exodeoxyribonuclease 7 large subunit, found in Fusobacterium nucleatum subsp. nucleatum (strain ATCC 25586 / DSM 15643 / BCRC 10681 / CIP 101130 / JCM 8532 / KCTC 2640 / LMG 13131 / VPI 4355).